Consider the following 1129-residue polypeptide: Inositol hexakisphosphate and diphosphoinositol-pentakisphosphate kinase 2 (1129 aa).

Ser-44 carries the phosphoserine modification. Residue 59–60 (KK) coordinates substrate. The ATP site is built by Arg-140, Lys-193, His-200, and Arg-219. A substrate-binding site is contributed by 219 to 220 (RK). Residue Ser-229 is modified to Phosphoserine. ATP contacts are provided by residues 243-246 (EEFM) and 252-254 (DVK). Residues Lys-254 and Arg-268 each coordinate substrate. ATP is bound by residues Ser-270, Asp-315, and 327–329 (DVN). Position 332-335 (332-335 (SFVK)) interacts with substrate. Residues 377–448 (PTTSGTMMEL…VLDIARQLLM (72 aa)) form a polyphosphoinositide-binding domain region. The interval 904 to 945 (KGCEEDKNLPSGYGYRPASRENEGRRSLKTDDDEPHTSKRDE) is disordered. The span at 921–945 (ASRENEGRRSLKTDDDEPHTSKRDE) shows a compositional bias: basic and acidic residues. Residues Ser-1051, Ser-1058, and Ser-1066 each carry the phosphoserine modification. Residues 1070–1129 (YTPTKILPTPPAALKSSKASSKAAAGGPSQAMAPHTSSRKKSINSKTEGHEPKKSTGKKR) form a disordered region. Over residues 1081–1098 (AALKSSKASSKAAAGGPS) the composition is skewed to low complexity. Phosphoserine is present on residues Ser-1106 and Ser-1107.

This sequence belongs to the histidine acid phosphatase family. VIP1 subfamily. In terms of tissue distribution, ubiquitously expressed. Expressed in the cochlear and vestibular sensory hair cells, supporting cells and spiral ganglion neurons.

It is found in the cytoplasm. Its subcellular location is the cytosol. The catalysed reaction is 1D-myo-inositol hexakisphosphate + ATP = 1-diphospho-1D-myo-inositol 2,3,4,5,6-pentakisphosphate + ADP. It carries out the reaction 5-diphospho-1D-myo-inositol 1,2,3,4,6-pentakisphosphate + ATP + H(+) = 1,5-bis(diphospho)-1D-myo-inositol 2,3,4,6-tetrakisphosphate + ADP. Bifunctional inositol kinase that acts in concert with the IP6K kinases IP6K1, IP6K2 and IP6K3 to synthesize the diphosphate group-containing inositol pyrophosphates diphosphoinositol pentakisphosphate, PP-InsP5, and bis-diphosphoinositol tetrakisphosphate, (PP)2-InsP4. PP-InsP5 and (PP)2-InsP4, also respectively called InsP7 and InsP8, regulate a variety of cellular processes, including apoptosis, vesicle trafficking, cytoskeletal dynamics, exocytosis, insulin signaling and neutrophil activation. Phosphorylates inositol hexakisphosphate (InsP6) at position 1 to produce PP-InsP5 which is in turn phosphorylated by IP6Ks to produce (PP)2-InsP4. Alternatively, phosphorylates PP-InsP5 at position 1, produced by IP6Ks from InsP6, to produce (PP)2-InsP4. Required for normal hearing. The polypeptide is Inositol hexakisphosphate and diphosphoinositol-pentakisphosphate kinase 2 (Mus musculus (Mouse)).